A 205-amino-acid polypeptide reads, in one-letter code: Colicin-E8 (205 aa).

Disordered regions lie at residues 24–109 and 136–187; these read AQTD…PDRI and PELS…VYDM. Basic and acidic residues-rich tracts occupy residues 53–76, 88–99, and 159–178; these read QERR…ESKR, PVGDKWLDDAGK, and RNKD…DKPI. Zn(2+) contacts are provided by His173, His198, and His202.

This sequence belongs to the colicin/pyosin nuclease family.

Its function is as follows. This plasmid-coded bactericidal protein is an endonuclease active on both single- and double-stranded DNA but with undefined specificity. Colicins are polypeptide toxins produced by and active against E.coli and closely related bacteria. The chain is Colicin-E8 (col) from Escherichia coli.